A 327-amino-acid polypeptide reads, in one-letter code: MSMMFLYEALRAAIDEEMGKDSNVFIVGEDVGHYGGSYKVTKDLHVKYGDLRVLDAPIAENSFTGMAIGAAMTGLRPIVEGMNMGFMLLAFNQISNNLSMLQYTSGGNFNIPVVIRGPGGIGKQLAAEHSQRLESCFQSIPGLQIVACSTAYNAKGLLKSAIIEKKPILFLEHVLLYNLKGFVPDEEYYLPLDKAEVVRSGSDVTIVTYSRMRYHVLAAVEKLVLNGQDPEIIDLISLKPLDLHTISKSIKKTHKIVIVEECAQTGGIAAELISLINTYLYDELDSPAVRLSSKDVPIPYNGNLEKSTLIQPDQIVDVVTNLLQYKT.

Thiamine diphosphate is bound at residue Glu60. The K(+) site is built by Val113, Ala161, Ile162, and Glu164.

As to quaternary structure, heterodimer of an alpha and a beta chain. The cofactor is thiamine diphosphate.

Its subcellular location is the plastid. The protein localises to the chloroplast. The enzyme catalyses N(6)-[(R)-lipoyl]-L-lysyl-[protein] + pyruvate + H(+) = N(6)-[(R)-S(8)-acetyldihydrolipoyl]-L-lysyl-[protein] + CO2. In terms of biological role, the pyruvate dehydrogenase complex catalyzes the overall conversion of pyruvate to acetyl-CoA and CO(2). It contains multiple copies of three enzymatic components: pyruvate dehydrogenase (E1), dihydrolipoamide acetyltransferase (E2) and lipoamide dehydrogenase (E3). The polypeptide is Pyruvate dehydrogenase E1 component subunit beta (pdhB) (Cyanidium caldarium (Red alga)).